Reading from the N-terminus, the 699-residue chain is MTAIRGGSRRAPGLALALLGGVLLGACHGDENAQVNALPGFVSGSVRKTAYDGASDDLLTAGLGKTGLGSDTRPGFANPAQPSAAELRRLAIYSNYRALVDITPNGGYGRFWGPNVDLAGNDTLGEGKIAGTEYLAYSDDGSGRKNVTLLVQVPASFDPANPCIVTATASGSRGVYGAIAAAGEWGLKRGCAVAYNDKGGGNGAHEIGTGVVTLIDGTLATASSAGSSSLFTASESSSTLAAFNSAFPNRYAYKHAHSQQNPEQDWGRVTLQAVEFAYWALNEQFGPVVDGTRHGIRYRPGDITTIAASVSNGGGSALAAAEQDTRGWITAVVVGEPQINVRMTPGVTVEQGGAPVPSFGRPLADYATLANLLQPCAAAAVAATGAPYLSALPMGVTQSIRTQRCATLAAAGLVSGADTASQASDALAQLHAAGYLADSDLLQAPMWDSQAMPAIAVTYANAYTRSRVTDNLCNFSFATTNPVTGAVAAPAVSPMTNLFGAGNGVPPTNGINLVFNGASGGVDHRLATPDASFAGAFCLRQLWAANQLGIGTNVDAVRVAANLQHKPAIIVHGRSDALVPVNHASRAYVAQNSATEGRASQLSFYEVTNGQHFDAFLSVPGFDTRFVPVHYYDEQALNLMWNHLKSGAPLPPSQVIRTVPRGGVPGAAPALSTANLPPIVQSPGANAIAVNAGVIDVPL.

An N-terminal signal peptide occupies residues 1-33 (MTAIRGGSRRAPGLALALLGGVLLGACHGDENA). Ser311 acts as the Charge relay system in catalysis.

The protein belongs to the D-(-)-3-hydroxybutyrate oligomer hydrolase family.

It localises to the secreted. It carries out the reaction (3R)-hydroxybutanoate dimer + H2O = 2 (R)-3-hydroxybutanoate + H(+). It functions in the pathway lipid metabolism; butanoate metabolism. Functionally, participates in the degradation of poly-3-hydroxybutyrate (PHB). It works downstream of poly(3-hydroxybutyrate) depolymerase, hydrolyzing D(-)-3-hydroxybutyrate oligomers of various length (3HB-oligomers) into 3HB-monomers. The sequence is that of D-(-)-3-hydroxybutyrate oligomer hydrolase from Burkholderia pseudomallei (strain 1106a).